We begin with the raw amino-acid sequence, 137 residues long: Ribosome-binding factor A (137 aa).

This sequence belongs to the RbfA family. As to quaternary structure, monomer. Binds 30S ribosomal subunits, but not 50S ribosomal subunits or 70S ribosomes.

It localises to the cytoplasm. Functionally, one of several proteins that assist in the late maturation steps of the functional core of the 30S ribosomal subunit. Associates with free 30S ribosomal subunits (but not with 30S subunits that are part of 70S ribosomes or polysomes). Required for efficient processing of 16S rRNA. May interact with the 5'-terminal helix region of 16S rRNA. This chain is Ribosome-binding factor A, found in Nitrobacter winogradskyi (strain ATCC 25391 / DSM 10237 / CIP 104748 / NCIMB 11846 / Nb-255).